The primary structure comprises 504 residues: Potassium voltage-gated channel subfamily V member 1 (504 aa).

2 disordered regions span residues 1–22 (MDLS…GGSL) and 172–193 (KKDT…QGPC). Over 1-214 (MDLSPRNRPL…EKPGSSTAAR (214 aa)) the chain is Cytoplasmic. Residues 10 to 22 (LLESSSLDSGGSL) are compositionally biased toward low complexity. Positions 172 to 185 (KKDTDDQESQHESE) are enriched in basic and acidic residues. Residues 215–235 (IFGVISIIFVAVSIVNMALMS) traverse the membrane as a helical segment. Topologically, residues 236–242 (AELSWLN) are extracellular. Residues 243–263 (LQLLEILEYVCISWFTGEFIL) form a helical membrane-spanning segment. Topologically, residues 264–280 (RFLCVKDRCRFLRKVPN) are cytoplasmic. The helical transmembrane segment at 281-301 (IIDLLAILPFYITLLVESLSG) threads the bilayer. Over 302 to 313 (SHTTQELENVGR) the chain is Extracellular. Residues 314–335 (LVQVLRLLRALRMLKLGRHSTG) traverse the membrane as a helical; Voltage-sensor segment. The Cytoplasmic portion of the chain corresponds to 336 to 349 (LRSLGMTITQCYEE). Residues 350–370 (VGLLLLFLSVGISIFSTIEYF) form a helical membrane-spanning segment. The Selectivity filter signature appears at 396–401 (TVGYGD). Residues 411–431 (IVAFMCILSGILVLALPIAII) form a helical membrane-spanning segment. Residues 432 to 504 (NDRFSACYFT…RSSGGDDFWF (73 aa)) are Cytoplasmic-facing.

Belongs to the potassium channel family. V (TC 1.A.1.2) subfamily. Kv8.1/KCNV1 sub-subfamily. In terms of assembly, heteromultimer with KCNB1 and KCNB2. Interacts with KCNC4 and KCND1. In terms of tissue distribution, detected in brain, throughout layers II, IV and VI of the brain cortex. Detected in cerebellum and hippocampus, in the granule cell layer, Purkinje cell layer, pyramidal cell layer and dentate gyrus. Detected at lower levels in olfactory bulb, amygdala, thalamus, hypothalamus, midbrain and brainstem.

The protein resides in the cell membrane. In terms of biological role, potassium channel subunit that does not form functional channels by itself. Modulates KCNB1 and KCNB2 channel activity by shifting the threshold for inactivation to more negative values and by slowing the rate of inactivation. Can down-regulate the channel activity of KCNB1, KCNB2, KCNC4 and KCND1, possibly by trapping them in intracellular membranes. The protein is Potassium voltage-gated channel subfamily V member 1 (KCNV1) of Mesocricetus auratus (Golden hamster).